The sequence spans 380 residues: Cytochrome b (380 aa).

The next 4 helical transmembrane spans lie at 34-54, 78-99, 114-134, and 179-199; these read FGSL…LLAT, WLIR…YLHI, WNTG…GYVL, and FFAL…IHLT. Heme b-binding residues include histidine 84 and histidine 98. Heme b contacts are provided by histidine 183 and histidine 197. Histidine 202 contributes to the a ubiquinone binding site. 4 consecutive transmembrane segments (helical) span residues 227 to 247, 289 to 309, 321 to 341, and 348 to 368; these read LKDI…ALFS, LGGV…PFLH, ISQL…WIGS, and FIII…ALFP.

Belongs to the cytochrome b family. In terms of assembly, the cytochrome bc1 complex contains 11 subunits: 3 respiratory subunits (MT-CYB, CYC1 and UQCRFS1), 2 core proteins (UQCRC1 and UQCRC2) and 6 low-molecular weight proteins (UQCRH/QCR6, UQCRB/QCR7, UQCRQ/QCR8, UQCR10/QCR9, UQCR11/QCR10 and a cleavage product of UQCRFS1). This cytochrome bc1 complex then forms a dimer. Requires heme b as cofactor.

The protein resides in the mitochondrion inner membrane. In terms of biological role, component of the ubiquinol-cytochrome c reductase complex (complex III or cytochrome b-c1 complex) that is part of the mitochondrial respiratory chain. The b-c1 complex mediates electron transfer from ubiquinol to cytochrome c. Contributes to the generation of a proton gradient across the mitochondrial membrane that is then used for ATP synthesis. The polypeptide is Cytochrome b (MT-CYB) (Buteo buteo (Eurasian buzzard)).